Consider the following 559-residue polypeptide: Dihydroxy-acid dehydratase (559 aa).

C49 serves as a coordination point for [2Fe-2S] cluster. Mg(2+) is bound at residue D81. Position 122 (C122) interacts with [2Fe-2S] cluster. Residues D123 and K124 each contribute to the Mg(2+) site. Position 124 is an N6-carboxylysine (K124). C194 provides a ligand contact to [2Fe-2S] cluster. E446 serves as a coordination point for Mg(2+). The active-site Proton acceptor is S472.

The protein belongs to the IlvD/Edd family. Homodimer. [2Fe-2S] cluster serves as cofactor. Requires Mg(2+) as cofactor.

It carries out the reaction (2R)-2,3-dihydroxy-3-methylbutanoate = 3-methyl-2-oxobutanoate + H2O. The enzyme catalyses (2R,3R)-2,3-dihydroxy-3-methylpentanoate = (S)-3-methyl-2-oxopentanoate + H2O. It functions in the pathway amino-acid biosynthesis; L-isoleucine biosynthesis; L-isoleucine from 2-oxobutanoate: step 3/4. The protein operates within amino-acid biosynthesis; L-valine biosynthesis; L-valine from pyruvate: step 3/4. Functions in the biosynthesis of branched-chain amino acids. Catalyzes the dehydration of (2R,3R)-2,3-dihydroxy-3-methylpentanoate (2,3-dihydroxy-3-methylvalerate) into 2-oxo-3-methylpentanoate (2-oxo-3-methylvalerate) and of (2R)-2,3-dihydroxy-3-methylbutanoate (2,3-dihydroxyisovalerate) into 2-oxo-3-methylbutanoate (2-oxoisovalerate), the penultimate precursor to L-isoleucine and L-valine, respectively. In Prochlorococcus marinus (strain MIT 9515), this protein is Dihydroxy-acid dehydratase.